Here is a 302-residue protein sequence, read N- to C-terminus: tRNA dimethylallyltransferase (302 aa).

21 to 28 is a binding site for ATP; that stretch reads GPTASGKS. 23–28 contributes to the substrate binding site; that stretch reads TASGKS.

This sequence belongs to the IPP transferase family. In terms of assembly, monomer. Requires Mg(2+) as cofactor.

The enzyme catalyses adenosine(37) in tRNA + dimethylallyl diphosphate = N(6)-dimethylallyladenosine(37) in tRNA + diphosphate. Catalyzes the transfer of a dimethylallyl group onto the adenine at position 37 in tRNAs that read codons beginning with uridine, leading to the formation of N6-(dimethylallyl)adenosine (i(6)A). This chain is tRNA dimethylallyltransferase, found in Paracoccus denitrificans (strain Pd 1222).